The following is a 357-amino-acid chain: Probable cinnamyl alcohol dehydrogenase (357 aa).

Zn(2+) is bound at residue Cys-47. Residue Thr-49 coordinates NADP(+). His-69, Glu-70, Cys-100, Cys-103, Cys-106, Cys-114, and Cys-163 together coordinate Zn(2+). NADP(+) contacts are provided by residues Thr-167, 188 to 193, 211 to 216, Thr-251, Gly-275, and 298 to 300; these read GLGGVG, SSSDKK, and SFI.

It belongs to the zinc-containing alcohol dehydrogenase family. Homodimer. The cofactor is Zn(2+).

The enzyme catalyses (E)-cinnamyl alcohol + NADP(+) = (E)-cinnamaldehyde + NADPH + H(+). It catalyses the reaction (E)-coniferol + NADP(+) = (E)-coniferaldehyde + NADPH + H(+). It carries out the reaction (E)-sinapyl alcohol + NADP(+) = (E)-sinapaldehyde + NADPH + H(+). The catalysed reaction is (E)-4-coumaroyl alcohol + NADP(+) = (E)-4-coumaraldehyde + NADPH + H(+). The enzyme catalyses (E)-caffeyl alcohol + NADP(+) = (E)-caffeyl aldehyde + NADPH + H(+). It functions in the pathway aromatic compound metabolism; phenylpropanoid biosynthesis. In terms of biological role, involved in lignin biosynthesis. Catalyzes the final step specific for the production of lignin monomers. Catalyzes the NADPH-dependent reduction of coniferaldehyde, 5-hydroxyconiferaldehyde, sinapaldehyde, 4-coumaraldehyde and caffeyl aldehyde to their respective alcohols. This chain is Probable cinnamyl alcohol dehydrogenase, found in Populus deltoides (Eastern poplar).